We begin with the raw amino-acid sequence, 389 residues long: Phospho-N-acetylmuramoyl-pentapeptide-transferase (389 aa).

10 helical membrane passes run 25-45, 73-93, 97-117, 135-155, 190-210, 222-242, 258-278, 286-306, 311-331, and 366-386; these read RAVMATITALGIGLVCGPWVI, TMGGVLILIGIAVATLLWGDL, FIWIVMLVTFGFGVIGWVDDY, FWQSVIGLFAAVYLAFSVSEA, ISYPLGVWGFIVLTYFVIVGA, GLVIMPVVLVGASLGVFAYVM, GAGELLIFCSAMGGAGLAFLW, VFMGDVGALALGGALGTVAVI, IVLFIMGGIFVAETLSVMLQV, and QVVVRFWIITLMLCLFGLTTL.

Belongs to the glycosyltransferase 4 family. MraY subfamily. Mg(2+) serves as cofactor.

Its subcellular location is the cell inner membrane. The catalysed reaction is UDP-N-acetyl-alpha-D-muramoyl-L-alanyl-gamma-D-glutamyl-meso-2,6-diaminopimeloyl-D-alanyl-D-alanine + di-trans,octa-cis-undecaprenyl phosphate = di-trans,octa-cis-undecaprenyl diphospho-N-acetyl-alpha-D-muramoyl-L-alanyl-D-glutamyl-meso-2,6-diaminopimeloyl-D-alanyl-D-alanine + UMP. Its pathway is cell wall biogenesis; peptidoglycan biosynthesis. Its function is as follows. Catalyzes the initial step of the lipid cycle reactions in the biosynthesis of the cell wall peptidoglycan: transfers peptidoglycan precursor phospho-MurNAc-pentapeptide from UDP-MurNAc-pentapeptide onto the lipid carrier undecaprenyl phosphate, yielding undecaprenyl-pyrophosphoryl-MurNAc-pentapeptide, known as lipid I. In Burkholderia cenocepacia (strain HI2424), this protein is Phospho-N-acetylmuramoyl-pentapeptide-transferase.